A 368-amino-acid polypeptide reads, in one-letter code: Quinolinate synthase (368 aa).

Iminosuccinate is bound by residues His46 and Ser63. Position 110 (Cys110) interacts with [4Fe-4S] cluster. Iminosuccinate contacts are provided by residues 141 to 143 (YVN) and Ser162. Cys230 is a [4Fe-4S] cluster binding site. Iminosuccinate contacts are provided by residues 256-258 (HPE) and Thr273. Cys320 provides a ligand contact to [4Fe-4S] cluster.

This sequence belongs to the quinolinate synthase family. Type 3 subfamily. [4Fe-4S] cluster serves as cofactor.

It localises to the cytoplasm. It carries out the reaction iminosuccinate + dihydroxyacetone phosphate = quinolinate + phosphate + 2 H2O + H(+). The protein operates within cofactor biosynthesis; NAD(+) biosynthesis; quinolinate from iminoaspartate: step 1/1. In terms of biological role, catalyzes the condensation of iminoaspartate with dihydroxyacetone phosphate to form quinolinate. The sequence is that of Quinolinate synthase from Bacillus cereus (strain ATCC 10987 / NRS 248).